Reading from the N-terminus, the 1358-residue chain is Mediator of RNA polymerase II transcription subunit 12 (1358 aa).

Residues 629-654 (VRYNYEQLQIQLNTAKEQMLQEQFEH) are a coiled coil.

The protein belongs to the Mediator complex subunit 12 family. As to quaternary structure, component of the SRB8-11 complex, which itself associates with the Mediator complex.

The protein localises to the nucleus. Its function is as follows. Component of the SRB8-11 complex. The SRB8-11 complex is a regulatory module of the Mediator complex which is itself involved in regulation of basal and activated RNA polymerase II-dependent transcription. The SRB8-11 complex may be involved in the transcriptional repression of a subset of genes regulated by Mediator. It may inhibit the association of the Mediator complex with RNA polymerase II to form the holoenzyme complex. This is Mediator of RNA polymerase II transcription subunit 12 (SRB8) from Eremothecium gossypii (strain ATCC 10895 / CBS 109.51 / FGSC 9923 / NRRL Y-1056) (Yeast).